Here is a 113-residue protein sequence, read N- to C-terminus: Nucleoid-associated protein ROP_41370 (113 aa).

It belongs to the YbaB/EbfC family. As to quaternary structure, homodimer.

The protein resides in the cytoplasm. It is found in the nucleoid. Binds to DNA and alters its conformation. May be involved in regulation of gene expression, nucleoid organization and DNA protection. The chain is Nucleoid-associated protein ROP_41370 from Rhodococcus opacus (strain B4).